A 209-amino-acid chain; its full sequence is Uracil phosphoribosyltransferase (209 aa).

5-phospho-alpha-D-ribose 1-diphosphate is bound by residues arginine 79, arginine 104, and 131 to 139 (DPMLATGGT). Uracil-binding positions include isoleucine 194 and 199–201 (GDA). Aspartate 200 lines the 5-phospho-alpha-D-ribose 1-diphosphate pocket.

Belongs to the UPRTase family. The cofactor is Mg(2+).

It carries out the reaction UMP + diphosphate = 5-phospho-alpha-D-ribose 1-diphosphate + uracil. It participates in pyrimidine metabolism; UMP biosynthesis via salvage pathway; UMP from uracil: step 1/1. With respect to regulation, allosterically activated by GTP. Catalyzes the conversion of uracil and 5-phospho-alpha-D-ribose 1-diphosphate (PRPP) to UMP and diphosphate. In Pseudoalteromonas translucida (strain TAC 125), this protein is Uracil phosphoribosyltransferase.